The chain runs to 456 residues: Chromosomal replication initiator protein DnaA (456 aa).

The interval methionine 1 to leucine 85 is domain I, interacts with DnaA modulators. Residues leucine 85–serine 117 are domain II. The segment at threonine 118–serine 334 is domain III, AAA+ region. The ATP site is built by glycine 162, glycine 164, lysine 165, and threonine 166. The tract at residues serine 335 to asparagine 456 is domain IV, binds dsDNA.

It belongs to the DnaA family. Oligomerizes as a right-handed, spiral filament on DNA at oriC.

It is found in the cytoplasm. Functionally, plays an essential role in the initiation and regulation of chromosomal replication. ATP-DnaA binds to the origin of replication (oriC) to initiate formation of the DNA replication initiation complex once per cell cycle. Binds the DnaA box (a 9 base pair repeat at the origin) and separates the double-stranded (ds)DNA. Forms a right-handed helical filament on oriC DNA; dsDNA binds to the exterior of the filament while single-stranded (ss)DNA is stabiized in the filament's interior. The ATP-DnaA-oriC complex binds and stabilizes one strand of the AT-rich DNA unwinding element (DUE), permitting loading of DNA polymerase. After initiation quickly degrades to an ADP-DnaA complex that is not apt for DNA replication. Binds acidic phospholipids. This Clostridium botulinum (strain Eklund 17B / Type B) protein is Chromosomal replication initiator protein DnaA.